Here is a 45-residue protein sequence, read N- to C-terminus: Cytochrome b559 subunit beta (45 aa).

Threonine 2 is subject to N-acetylthreonine. Residues 2 to 17 (TSNTPNQEPVSYPIFT) are Cytoplasmic-facing. The chain crosses the membrane as a helical span at residues 18-42 (VRWVAVHTLAVPTIFFLGAIAAMQF). Residue histidine 24 participates in heme binding. Residues 43-45 (IQR) lie on the Lumenal side of the membrane.

Heterodimer of an alpha subunit and a beta subunit. PSII is composed of 1 copy each of membrane proteins PsbA, PsbB, PsbC, PsbD, PsbE, PsbF, PsbH, PsbI, PsbJ, PsbK, PsbL, PsbM, PsbT, PsbX, PsbY, PsbZ, Psb30/Ycf12, peripheral proteins PsbO, CyanoQ (PsbQ), PsbU, PsbV and a large number of cofactors. It forms dimeric complexes. Part of a photosystem II (PSII) assembly intermediate complex PSII-I; crystallized from a strain deleted of psbJ, it forms monomeric PSII before addition of the oxygen evolving complex. PSII-I includes 3 assembly factors not found in mature PSII (Psb27, Psb28 and Psb34). Heme b serves as cofactor.

It localises to the cellular thylakoid membrane. This b-type cytochrome is tightly associated with the reaction center of photosystem II (PSII). PSII is a light-driven water:plastoquinone oxidoreductase that uses light energy to abstract electrons from H(2)O, generating O(2) and a proton gradient subsequently used for ATP formation. It consists of a core antenna complex that captures photons, and an electron transfer chain that converts photonic excitation into a charge separation. The protein is Cytochrome b559 subunit beta of Thermosynechococcus vestitus (strain NIES-2133 / IAM M-273 / BP-1).